Here is an 808-residue protein sequence, read N- to C-terminus: Sucrose synthase 4 (808 aa).

Residues 277-754 (MVFNVVILSP…GLERIQEKYT (478 aa)) are GT-B glycosyltransferase.

Belongs to the glycosyltransferase 1 family. Plant sucrose synthase subfamily. As to expression, detected in the whole plant with highest expression in young rosette leaves and roots.

It catalyses the reaction an NDP-alpha-D-glucose + D-fructose = a ribonucleoside 5'-diphosphate + sucrose + H(+). In terms of biological role, sucrose-cleaving enzyme that provides UDP-glucose and fructose for various metabolic pathways. The sequence is that of Sucrose synthase 4 (SUS4) from Arabidopsis thaliana (Mouse-ear cress).